Reading from the N-terminus, the 222-residue chain is Acyl-protein thioesterase 1 homolog 2 (222 aa).

Residues Ser-116, Asp-169, and His-202 each act as charge relay system in the active site.

Belongs to the AB hydrolase superfamily. AB hydrolase 2 family.

It is found in the cytoplasm. The protein localises to the nucleus. It carries out the reaction S-hexadecanoyl-L-cysteinyl-[protein] + H2O = L-cysteinyl-[protein] + hexadecanoate + H(+). In terms of biological role, hydrolyzes fatty acids from S-acylated cysteine residues in proteins with a strong preference for palmitoylated G-alpha proteins over other acyl substrates. Mediates the deacylation of G-alpha proteins such as GPA1 in vivo, but has weak or no activity toward palmitoylated Ras proteins. Has weak lysophospholipase activity in vitro; however such activity may not exist in vivo. The polypeptide is Acyl-protein thioesterase 1 homolog 2 (Dictyostelium discoideum (Social amoeba)).